A 225-amino-acid polypeptide reads, in one-letter code: Adenosylcobinamide-GDP ribazoletransferase (225 aa).

5 helical membrane-spanning segments follow: residues 34–54 (FVGI…FWFL), 93–113 (NLGT…FYSF), 116–136 (VSAF…LLLL), 165–185 (PLLL…AITI), and 204–224 (VVGA…YFLA).

The protein belongs to the CobS family. Requires Mg(2+) as cofactor.

It is found in the cell membrane. It catalyses the reaction alpha-ribazole + adenosylcob(III)inamide-GDP = adenosylcob(III)alamin + GMP + H(+). It carries out the reaction alpha-ribazole 5'-phosphate + adenosylcob(III)inamide-GDP = adenosylcob(III)alamin 5'-phosphate + GMP + H(+). It participates in cofactor biosynthesis; adenosylcobalamin biosynthesis; adenosylcobalamin from cob(II)yrinate a,c-diamide: step 7/7. Functionally, joins adenosylcobinamide-GDP and alpha-ribazole to generate adenosylcobalamin (Ado-cobalamin). Also synthesizes adenosylcobalamin 5'-phosphate from adenosylcobinamide-GDP and alpha-ribazole 5'-phosphate. This chain is Adenosylcobinamide-GDP ribazoletransferase (cobS1), found in Archaeoglobus fulgidus (strain ATCC 49558 / DSM 4304 / JCM 9628 / NBRC 100126 / VC-16).